Reading from the N-terminus, the 93-residue chain is Early nodulin-12A (93 aa).

Residues M1–A24 form the signal peptide. A disordered region spans residues P30–F93. Repeat copies occupy residues P34 to E38, P39 to K43, P44 to E48, P49 to K53, P54 to D58, P59 to K63, P64 to E68, P69 to K73, P74 to E78, and P79 to R83. The segment at P34–R83 is 10 X 5 AA tandem repeats of P-P-[HQVRT]-[HKNT]-[DEKR]. Positions H46–F93 are enriched in basic and acidic residues.

Belongs to the plant proline-rich protein superfamily. ENOD12 family. More abundant in the young nodules than the mature nodules.

It localises to the secreted. The protein resides in the cell wall. Its function is as follows. Involved in the infection process during the plant-rhizobium interaction. In Medicago sativa (Alfalfa), this protein is Early nodulin-12A (ENOD12A).